The primary structure comprises 549 residues: Hydroxylamine reductase (549 aa).

The [4Fe-4S] cluster site is built by Cys-5, Cys-8, Cys-17, and Cys-23. His-242, Glu-266, Cys-310, Cys-402, Cys-430, Cys-455, Glu-490, and Lys-492 together coordinate hybrid [4Fe-2O-2S] cluster. Cys-402 carries the cysteine persulfide modification.

This sequence belongs to the HCP family. Requires [4Fe-4S] cluster as cofactor. The cofactor is hybrid [4Fe-2O-2S] cluster.

The protein resides in the cytoplasm. It catalyses the reaction A + NH4(+) + H2O = hydroxylamine + AH2 + H(+). Its function is as follows. Catalyzes the reduction of hydroxylamine to form NH(3) and H(2)O. This is Hydroxylamine reductase from Clostridium novyi (strain NT).